A 508-amino-acid polypeptide reads, in one-letter code: Galactose-1-phosphate uridylyltransferase (508 aa).

The protein belongs to the galactose-1-phosphate uridylyltransferase type 2 family.

Its subcellular location is the cytoplasm. The enzyme catalyses alpha-D-galactose 1-phosphate + UDP-alpha-D-glucose = alpha-D-glucose 1-phosphate + UDP-alpha-D-galactose. Its pathway is carbohydrate metabolism; galactose metabolism. The chain is Galactose-1-phosphate uridylyltransferase (galT) from Halalkalibacterium halodurans (strain ATCC BAA-125 / DSM 18197 / FERM 7344 / JCM 9153 / C-125) (Bacillus halodurans).